The primary structure comprises 126 residues: MATERRVARVAELIKREVSQLLMYEIRDERVGAGMVSVTDVEVSGDLQHAKIFVSIYSTEEVRRSTMAGLKAASGFVRRELGQRIRLRRTPEVVFIEDRSLERGSRVLALLNQIGQQQSTSEVLES.

This sequence belongs to the RbfA family. Monomer. Binds 30S ribosomal subunits, but not 50S ribosomal subunits or 70S ribosomes.

The protein resides in the cytoplasm. Functionally, one of several proteins that assist in the late maturation steps of the functional core of the 30S ribosomal subunit. Associates with free 30S ribosomal subunits (but not with 30S subunits that are part of 70S ribosomes or polysomes). Required for efficient processing of 16S rRNA. May interact with the 5'-terminal helix region of 16S rRNA. The sequence is that of Ribosome-binding factor A from Thermosynechococcus vestitus (strain NIES-2133 / IAM M-273 / BP-1).